The primary structure comprises 207 residues: Small ribosomal subunit protein uS4 (207 aa).

A compositionally biased stretch (basic and acidic residues) spans S29–P38. The tract at residues S29–L54 is disordered. Over residues G42–Y52 the composition is skewed to polar residues. The region spanning S97–L160 is the S4 RNA-binding domain.

This sequence belongs to the universal ribosomal protein uS4 family. In terms of assembly, part of the 30S ribosomal subunit. Contacts protein S5. The interaction surface between S4 and S5 is involved in control of translational fidelity.

Functionally, one of the primary rRNA binding proteins, it binds directly to 16S rRNA where it nucleates assembly of the body of the 30S subunit. With S5 and S12 plays an important role in translational accuracy. The protein is Small ribosomal subunit protein uS4 of Polaromonas naphthalenivorans (strain CJ2).